Consider the following 213-residue polypeptide: MKPFTELNGRVAPLDRANVDTDAIIPKQFLKSIKRSGFGPNLFDEWRYTDHGEPGQDCVNRPKNPDFVLNQPRYEGAQILLTRDNFGCGSSREHAPWALEDYGFRVLIGSSFADIFFNNCFKNGLLPIVLPAPEIDELFRQCEATDGYRLKVDLATQTIVRPDGKTIAFEVDPFRKECLLNGWDDIGLTLRHADRIRTFEEKRRADHPYYFVA.

This sequence belongs to the LeuD family. LeuD type 1 subfamily. Heterodimer of LeuC and LeuD.

It carries out the reaction (2R,3S)-3-isopropylmalate = (2S)-2-isopropylmalate. Its pathway is amino-acid biosynthesis; L-leucine biosynthesis; L-leucine from 3-methyl-2-oxobutanoate: step 2/4. Functionally, catalyzes the isomerization between 2-isopropylmalate and 3-isopropylmalate, via the formation of 2-isopropylmaleate. This Aromatoleum aromaticum (strain DSM 19018 / LMG 30748 / EbN1) (Azoarcus sp. (strain EbN1)) protein is 3-isopropylmalate dehydratase small subunit.